A 92-amino-acid chain; its full sequence is Long neurotoxin 1 (92 aa).

Positions 1-21 are cleaved as a signal peptide; it reads MKILLLTLVVVTIVCLDLAYT. 5 cysteine pairs are disulfide-bonded: Cys-24–Cys-41, Cys-34–Cys-62, Cys-47–Cys-51, Cys-66–Cys-77, and Cys-78–Cys-83.

Belongs to the three-finger toxin family. Long-chain subfamily. Type II alpha-neurotoxin sub-subfamily. Expressed by the venom gland.

The protein localises to the secreted. Its function is as follows. Binds with high affinity to muscular (alpha-1/CHRNA1) and neuronal (alpha-7/CHRNA7) nicotinic acetylcholine receptor (nAChR) and inhibits acetylcholine from binding to the receptor, thereby impairing neuromuscular and neuronal transmission. In Hydrophis hardwickii (Hardwick's spine-bellied seasnake), this protein is Long neurotoxin 1.